A 413-amino-acid polypeptide reads, in one-letter code: 5'-deoxyadenosine deaminase (413 aa).

Residues histidine 57 and histidine 59 each coordinate Zn(2+). Residues glutamate 86 and histidine 171 each contribute to the substrate site. Position 198 (histidine 198) interacts with Zn(2+). 2 residues coordinate substrate: glutamate 201 and aspartate 286. Residue aspartate 286 coordinates Zn(2+).

The protein belongs to the metallo-dependent hydrolases superfamily. MTA/SAH deaminase family. In terms of assembly, homotetramer. The cofactor is Zn(2+).

It catalyses the reaction 5'-deoxyadenosine + H2O + H(+) = 5'-deoxyinosine + NH4(+). The catalysed reaction is S-adenosyl-L-homocysteine + H2O + H(+) = S-inosyl-L-homocysteine + NH4(+). It carries out the reaction S-methyl-5'-thioadenosine + H2O + H(+) = S-methyl-5'-thioinosine + NH4(+). The enzyme catalyses adenosine + H2O + H(+) = inosine + NH4(+). It functions in the pathway amino-acid biosynthesis; S-adenosyl-L-methionine biosynthesis. Its function is as follows. Catalyzes the deamination of three SAM-derived enzymatic products, namely 5'-deoxyadenosine, S-adenosyl-L-homocysteine, and 5'-methylthioadenosine, to produce the inosine analogs. Can also deaminate adenosine. The preferred substrate for this enzyme is 5'-deoxyadenosine, but all these substrates are efficiently deaminated. Likely functions in a S-adenosyl-L-methionine (SAM) recycling pathway from S-adenosyl-L-homocysteine (SAH) produced from SAM-dependent methylation reactions. May also be involved in the recycling of 5'-deoxyadenosine, whereupon the 5'-deoxyribose moiety of 5'-deoxyinosine is further metabolized to deoxyhexoses used for the biosynthesis of aromatic amino acids in methanogens. The chain is 5'-deoxyadenosine deaminase from Methanothrix thermoacetophila (strain DSM 6194 / JCM 14653 / NBRC 101360 / PT) (Methanosaeta thermophila).